Here is a 356-residue protein sequence, read N- to C-terminus: tRNA N6-adenosine threonylcarbamoyltransferase (356 aa).

Positions 115 and 119 each coordinate Fe cation. Residues 138 to 142 (LVSGG), D171, G184, and N283 each bind substrate. D311 is a binding site for Fe cation.

This sequence belongs to the KAE1 / TsaD family. Fe(2+) is required as a cofactor.

The protein resides in the cytoplasm. The enzyme catalyses L-threonylcarbamoyladenylate + adenosine(37) in tRNA = N(6)-L-threonylcarbamoyladenosine(37) in tRNA + AMP + H(+). In terms of biological role, required for the formation of a threonylcarbamoyl group on adenosine at position 37 (t(6)A37) in tRNAs that read codons beginning with adenine. Is involved in the transfer of the threonylcarbamoyl moiety of threonylcarbamoyl-AMP (TC-AMP) to the N6 group of A37, together with TsaE and TsaB. TsaD likely plays a direct catalytic role in this reaction. The protein is tRNA N6-adenosine threonylcarbamoyltransferase of Prochlorococcus marinus (strain MIT 9303).